Consider the following 86-residue polypeptide: LPNPSGFVTCLSSISKSVYTPAINLKAVIADPVAKTAVVQAGATLGEVYYXIIYARVLWVGNTTQKLEWIRSLHDYQSSFFPFFSA.

N-linked (GlcNAc...) asparagine glycosylation is present at Asn62.

Belongs to the oxygen-dependent FAD-linked oxidoreductase family. FAD is required as a cofactor. Carries MUXF and MMXF, two complex N-linked glycans with alpha-1,3-fucose and beta-1,2-xylose residues in their structures. MMXF is added to Asn-62.

The sequence is that of Allergen Api g 5 from Apium graveolens (Celery).